Reading from the N-terminus, the 236-residue chain is Ribose-5-phosphate isomerase A (236 aa).

Substrate-binding positions include 32-35 (TGST), 87-90 (DGSD), and 100-103 (KGGG). Glutamate 109 acts as the Proton acceptor in catalysis. Lysine 127 contacts substrate.

This sequence belongs to the ribose 5-phosphate isomerase family. Homodimer.

It catalyses the reaction aldehydo-D-ribose 5-phosphate = D-ribulose 5-phosphate. Its pathway is carbohydrate degradation; pentose phosphate pathway; D-ribose 5-phosphate from D-ribulose 5-phosphate (non-oxidative stage): step 1/1. Its function is as follows. Catalyzes the reversible conversion of ribose-5-phosphate to ribulose 5-phosphate. This chain is Ribose-5-phosphate isomerase A, found in Haloquadratum walsbyi (strain DSM 16790 / HBSQ001).